The primary structure comprises 61 residues: Photosystem II reaction center protein K (61 aa).

The propeptide occupies 1-24 (MPNIFSLICICLNSALQPSGFFFA). A helical membrane pass occupies residues 36-56 (IVDFMPVIPVLFFLLAFVWQA).

This sequence belongs to the PsbK family. In terms of assembly, PSII is composed of 1 copy each of membrane proteins PsbA, PsbB, PsbC, PsbD, PsbE, PsbF, PsbH, PsbI, PsbJ, PsbK, PsbL, PsbM, PsbT, PsbX, PsbY, PsbZ, Psb30/Ycf12, at least 3 peripheral proteins of the oxygen-evolving complex and a large number of cofactors. It forms dimeric complexes.

The protein localises to the plastid. It localises to the chloroplast thylakoid membrane. In terms of biological role, one of the components of the core complex of photosystem II (PSII). PSII is a light-driven water:plastoquinone oxidoreductase that uses light energy to abstract electrons from H(2)O, generating O(2) and a proton gradient subsequently used for ATP formation. It consists of a core antenna complex that captures photons, and an electron transfer chain that converts photonic excitation into a charge separation. The polypeptide is Photosystem II reaction center protein K (Nymphaea alba (White water-lily)).